A 61-amino-acid chain; its full sequence is MAKKAMIIKQQRTPKFSTRAYNRCKICGRPHAYIRKFGICRLCFRQLAYKGQIPGVKKASW.

The Zn(2+) site is built by Cys24, Cys27, Cys40, and Cys43.

The protein belongs to the universal ribosomal protein uS14 family. Zinc-binding uS14 subfamily. In terms of assembly, part of the 30S ribosomal subunit. Contacts proteins S3 and S10. Zn(2+) is required as a cofactor.

Binds 16S rRNA, required for the assembly of 30S particles and may also be responsible for determining the conformation of the 16S rRNA at the A site. The sequence is that of Small ribosomal subunit protein uS14 from Ruminiclostridium cellulolyticum (strain ATCC 35319 / DSM 5812 / JCM 6584 / H10) (Clostridium cellulolyticum).